Consider the following 167-residue polypeptide: Leptin (167 aa).

Positions 1–21 (MRCGPLCRFLWLWPYLSCVEA) are cleaved as a signal peptide. Cys-117 and Cys-167 are joined by a disulfide.

The protein belongs to the leptin family.

It localises to the secreted. In terms of biological role, key player in the regulation of energy balance and body weight control. Once released into the circulation, has central and peripheral effects by binding LEPR, found in many tissues, which results in the activation of several major signaling pathways. In the hypothalamus, acts as an appetite-regulating factor that induces a decrease in food intake and an increase in energy consumption by inducing anorexinogenic factors and suppressing orexigenic neuropeptides, also regulates bone mass and secretion of hypothalamo-pituitary-adrenal hormones. In the periphery, increases basal metabolism, influences reproductive function, regulates pancreatic beta-cell function and insulin secretion, is pro-angiogenic for endothelial cell and affects innate and adaptive immunity. In the arcuate nucleus of the hypothalamus, activates by depolarization POMC neurons inducing FOS and SOCS3 expression to release anorexigenic peptides and inhibits by hyperpolarization NPY neurons inducing SOCS3 with a consequent reduction on release of orexigenic peptides. In addition to its known satiety inducing effect, has a modulatory role in nutrient absorption. In the intestine, reduces glucose absorption by enterocytes by activating PKC and leading to a sequential activation of p38, PI3K and ERK signaling pathways which exerts an inhibitory effect on glucose absorption. Acts as a growth factor on certain tissues, through the activation of different signaling pathways increases expression of genes involved in cell cycle regulation such as CCND1, via JAK2-STAT3 pathway, or VEGFA, via MAPK1/3 and PI3K-AKT1 pathways. May also play an apoptotic role via JAK2-STAT3 pathway and up-regulation of BIRC5 expression. Pro-angiogenic, has mitogenic activity on vascular endothelial cells and plays a role in matrix remodeling by regulating the expression of matrix metalloproteinases (MMPs) and tissue inhibitors of metalloproteinases (TIMPs). In innate immunity, modulates the activity and function of neutrophils by increasing chemotaxis and the secretion of oxygen radicals. Increases phagocytosis by macrophages and enhances secretion of pro-inflammatory mediators. Increases cytotoxic ability of NK cells. Plays a pro-inflammatory role, in synergy with IL1B, by inducing NOS2 which promotes the production of IL6, IL8 and Prostaglandin E2, through a signaling pathway that involves JAK2, PI3K, MAP2K1/MEK1 and MAPK14/p38. In adaptive immunity, promotes the switch of memory T-cells towards T helper-1 cell immune responses. Increases CD4(+)CD25(-) T-cell proliferation and reduces autophagy during TCR (T-cell receptor) stimulation, through MTOR signaling pathway activation and BCL2 up-regulation. The polypeptide is Leptin (LEP) (Canis lupus familiaris (Dog)).